Here is a 282-residue protein sequence, read N- to C-terminus: ATP synthase gamma chain (282 aa).

It belongs to the ATPase gamma chain family. As to quaternary structure, F-type ATPases have 2 components, CF(1) - the catalytic core - and CF(0) - the membrane proton channel. CF(1) has five subunits: alpha(3), beta(3), gamma(1), delta(1), epsilon(1). CF(0) has three main subunits: a, b and c.

Its subcellular location is the cell membrane. Produces ATP from ADP in the presence of a proton gradient across the membrane. The gamma chain is believed to be important in regulating ATPase activity and the flow of protons through the CF(0) complex. The protein is ATP synthase gamma chain of Clostridium botulinum (strain ATCC 19397 / Type A).